We begin with the raw amino-acid sequence, 769 residues long: Serine/threonine-protein kinase PLK4 (769 aa).

Residues 14–267 enclose the Protein kinase domain; the sequence is YEVQHLLGKG…LEAVLCHPFM (254 aa). ATP-binding positions include 20 to 28 and Lys-43; that span reads LGKGGFATV. Asp-138 functions as the Proton acceptor in the catalytic mechanism. The Cryptic POLO box 1 (CPB1) domain occupies 381–498; sequence EDRISVPPLN…ARFVGLVKSK (118 aa). In terms of domain architecture, Cryptic POLO box 2 (CPB2) spans 499-602; it reads TPKVTYFSTL…GRRPITDVQP (104 aa). The 80-residue stretch at 660 to 739 folds into the POLO box domain; the sequence is PIKRINVPDI…IPNIQLKLKT (80 aa).

Belongs to the protein kinase superfamily. Ser/Thr protein kinase family. CDC5/Polo subfamily. As to quaternary structure, homodimer. In terms of processing, ubiquitinated by the SCF(Slimb) ubiquitin ligase complex; leading to its degradation by the proteasome during interphase and regulating centriole number and ensuring the block to centriole reduplication.

Its subcellular location is the cytoplasm. It localises to the cytoskeleton. The protein resides in the microtubule organizing center. It is found in the centrosome. The protein localises to the centriole. It catalyses the reaction L-seryl-[protein] + ATP = O-phospho-L-seryl-[protein] + ADP + H(+). It carries out the reaction L-threonyl-[protein] + ATP = O-phospho-L-threonyl-[protein] + ADP + H(+). Its function is as follows. Serine/threonine-protein kinase that plays a central role in centriole duplication. Able to trigger procentriole formation on the surface of the mother centriole cylinder, using mother centriole as a platform, leading to the recruitment of centriole biogenesis proteins such as sas-6. When overexpressed, it is able to induce centrosome amplification through the simultaneous generation of multiple procentrioles adjoining each parental centriole during S phase. Centrosome amplification following overexpression can initiate tumorigenesis, highlighting the importance of centrosome regulation in cancers. This Drosophila simulans (Fruit fly) protein is Serine/threonine-protein kinase PLK4 (SAK).